A 414-amino-acid polypeptide reads, in one-letter code: Gamma-glutamyl phosphate reductase (414 aa).

It belongs to the gamma-glutamyl phosphate reductase family.

It is found in the cytoplasm. It carries out the reaction L-glutamate 5-semialdehyde + phosphate + NADP(+) = L-glutamyl 5-phosphate + NADPH + H(+). It participates in amino-acid biosynthesis; L-proline biosynthesis; L-glutamate 5-semialdehyde from L-glutamate: step 2/2. Its function is as follows. Catalyzes the NADPH-dependent reduction of L-glutamate 5-phosphate into L-glutamate 5-semialdehyde and phosphate. The product spontaneously undergoes cyclization to form 1-pyrroline-5-carboxylate. The protein is Gamma-glutamyl phosphate reductase of Xanthomonas campestris pv. campestris (strain 8004).